Here is a 195-residue protein sequence, read N- to C-terminus: ATP-dependent Clp protease proteolytic subunit (195 aa).

The Nucleophile role is filled by Ser99. The active site involves His124.

This sequence belongs to the peptidase S14 family. As to quaternary structure, fourteen ClpP subunits assemble into 2 heptameric rings which stack back to back to give a disk-like structure with a central cavity, resembling the structure of eukaryotic proteasomes.

The protein localises to the cytoplasm. The catalysed reaction is Hydrolysis of proteins to small peptides in the presence of ATP and magnesium. alpha-casein is the usual test substrate. In the absence of ATP, only oligopeptides shorter than five residues are hydrolyzed (such as succinyl-Leu-Tyr-|-NHMec, and Leu-Tyr-Leu-|-Tyr-Trp, in which cleavage of the -Tyr-|-Leu- and -Tyr-|-Trp bonds also occurs).. Cleaves peptides in various proteins in a process that requires ATP hydrolysis. Has a chymotrypsin-like activity. Plays a major role in the degradation of misfolded proteins. In Coxiella burnetii (strain CbuG_Q212) (Coxiella burnetii (strain Q212)), this protein is ATP-dependent Clp protease proteolytic subunit.